Reading from the N-terminus, the 216-residue chain is Probable Golgi SNAP receptor complex member 2 (216 aa).

Residues 1–194 (MESLYHQTNN…IERRLVEDRR (194 aa)) are Cytoplasmic-facing. A coiled-coil region spans residues 62-103 (QRQSSKLRVDQLKYDLRHLQTSLQTARERRQRRMQEISEREQ). A helical; Anchor for type IV membrane protein transmembrane segment spans residues 195-215 (IFIGGVVVTLLIIALIIYFLV). Residue Leu216 is a topological domain, vesicular.

It belongs to the GOSR2 family. As to quaternary structure, part of a unique SNARE complex.

It localises to the golgi apparatus. It is found in the cis-Golgi network membrane. Its subcellular location is the golgi apparatus membrane. The protein localises to the endoplasmic reticulum membrane. Functionally, involved in transport of proteins from the cis/medial-Golgi to the trans-Golgi network. In Drosophila melanogaster (Fruit fly), this protein is Probable Golgi SNAP receptor complex member 2.